The primary structure comprises 465 residues: UDP-N-acetylmuramate--L-alanine ligase (465 aa).

Position 118 to 124 (118 to 124 (GTHGKTT)) interacts with ATP.

Belongs to the MurCDEF family.

It is found in the cytoplasm. The enzyme catalyses UDP-N-acetyl-alpha-D-muramate + L-alanine + ATP = UDP-N-acetyl-alpha-D-muramoyl-L-alanine + ADP + phosphate + H(+). It functions in the pathway cell wall biogenesis; peptidoglycan biosynthesis. In terms of biological role, cell wall formation. This Ruegeria pomeroyi (strain ATCC 700808 / DSM 15171 / DSS-3) (Silicibacter pomeroyi) protein is UDP-N-acetylmuramate--L-alanine ligase.